A 114-amino-acid chain; its full sequence is Beta-microseminoprotein (114 aa).

The signal sequence occupies residues 1–20 (MNVLLGGFVIFATFVTLCNA). Intrachain disulfides connect Cys-22-Cys-70, Cys-38-Cys-62, Cys-57-Cys-93, Cys-60-Cys-69, and Cys-84-Cys-107.

The protein belongs to the beta-microseminoprotein family. As to quaternary structure, homodimer; Interacts with PI16.

Its subcellular location is the secreted. In Papio anubis (Olive baboon), this protein is Beta-microseminoprotein (MSMB).